A 169-amino-acid polypeptide reads, in one-letter code: Phycobiliprotein beta chain (169 aa).

Asn72 carries the N4-methylasparagine modification. Cys82 provides a ligand contact to (2R,3E)-phycocyanobilin.

It belongs to the phycobiliprotein family. As to quaternary structure, heterodimer of an alpha and a beta chain. Post-translationally, contains one covalently linked bilin chromophore.

Its subcellular location is the cellular thylakoid membrane. Light-harvesting photosynthetic bile pigment-protein from the phycobiliprotein complex. This is a protein functionally equivalent to, but with weaker absorbance than, allophycocyanin beta chain. The polypeptide is Phycobiliprotein beta chain (apcD) (Mastigocladus laminosus (Fischerella sp.)).